The chain runs to 130 residues: Small ribosomal subunit protein uS9 (130 aa).

It belongs to the universal ribosomal protein uS9 family.

This is Small ribosomal subunit protein uS9 from Salmonella paratyphi A (strain AKU_12601).